Consider the following 1212-residue polypeptide: Histone demethylase UTY (1212 aa).

8 TPR repeats span residues 88–121, 125–158, 165–193, 200–233, 245–278, 279–312, 313–346, and 347–380; these read SDFF…QTDY, AAFL…DPNF, HLRL…IDCN, VEIQ…ESLP, GWMH…DPNS, GQSW…SEAS, ADTW…DHGH, and AAAW…KSCN. Residues 530 to 539 show a composition bias toward basic and acidic residues; sequence FTKESKDSRS. The tract at residues 530–555 is disordered; sequence FTKESKDSRSKSLTSKTSRKDRDTSN. The residue at position 752 (Thr-752) is a Phosphothreonine. The tract at residues 865 to 886 is disordered; that stretch reads RRTQVKDYSDNESTCSDNSGRR. The 164-residue stretch at 907 to 1070 folds into the JmjC domain; sequence KWKLQLHELT…YKLAVERYEW (164 aa). Residues His-958, Glu-960, and His-1038 each coordinate Fe cation. Cys-1143, Cys-1146, Cys-1170, and Cys-1173 together coordinate Zn(2+).

It belongs to the UTX family. As to quaternary structure, binds TLE1 and TLE2. L-ascorbate serves as cofactor. Fe(2+) is required as a cofactor.

The protein resides in the nucleus. It carries out the reaction N(6),N(6),N(6)-trimethyl-L-lysyl(27)-[histone H3] + 2 2-oxoglutarate + 2 O2 = N(6)-methyl-L-lysyl(27)-[histone H3] + 2 formaldehyde + 2 succinate + 2 CO2. Functionally, male-specific histone demethylase that catalyzes trimethylated 'Lys-27' (H3K27me3) demethylation in histone H3. Has relatively low KDM activity. The polypeptide is Histone demethylase UTY (Uty) (Mus musculus (Mouse)).